Consider the following 443-residue polypeptide: Tol-Pal system protein TolB (443 aa).

Residues 1-24 form the signal peptide; it reads MSFQIRVFTAILAVLSLFTAPVLA. A disordered region spans residues 424-443; it reads LRPVRTPEGGSDPSWSPLQR.

Belongs to the TolB family. The Tol-Pal system is composed of five core proteins: the inner membrane proteins TolA, TolQ and TolR, the periplasmic protein TolB and the outer membrane protein Pal. They form a network linking the inner and outer membranes and the peptidoglycan layer.

The protein localises to the periplasm. Part of the Tol-Pal system, which plays a role in outer membrane invagination during cell division and is important for maintaining outer membrane integrity. This is Tol-Pal system protein TolB from Roseobacter denitrificans (strain ATCC 33942 / OCh 114) (Erythrobacter sp. (strain OCh 114)).